The following is a 463-amino-acid chain: Nuclear hormone receptor family member nhr-79 (463 aa).

The nuclear receptor DNA-binding region spans 3–81; that stretch reads RGKCMVCDSP…AGMMRDLVQA (79 aa). 2 NR C4-type zinc fingers span residues 6 to 27 and 43 to 64; these read CMVCDSPNATNYHFGAQSCKAC and CLGDGVHSCKIDHTLRLNCRHC. Residues 83 to 119 are disordered; it reads REIKSDKGKNSRNSSQSEDFFSPPPEQPGPSNYFDQF. The 261-residue stretch at 203–463 folds into the NR LBD domain; the sequence is YTEQVINLNM…ILKDMLKFQY (261 aa).

The protein belongs to the nuclear hormone receptor family.

It localises to the nucleus. Its function is as follows. Orphan nuclear receptor. The chain is Nuclear hormone receptor family member nhr-79 (nhr-79) from Caenorhabditis elegans.